The sequence spans 559 residues: DNA ligase (559 aa).

Glu247 contributes to the ATP binding site. The N6-AMP-lysine intermediate role is filled by Lys249. Arg254, Arg269, Glu299, Phe339, Arg414, and Lys420 together coordinate ATP.

The protein belongs to the ATP-dependent DNA ligase family. Monomer. Mg(2+) is required as a cofactor.

The enzyme catalyses ATP + (deoxyribonucleotide)n-3'-hydroxyl + 5'-phospho-(deoxyribonucleotide)m = (deoxyribonucleotide)n+m + AMP + diphosphate.. It carries out the reaction NAD(+) + (deoxyribonucleotide)n-3'-hydroxyl + 5'-phospho-(deoxyribonucleotide)m = (deoxyribonucleotide)n+m + AMP + beta-nicotinamide D-nucleotide.. Its function is as follows. DNA ligase that seals nicks in double-stranded DNA during DNA replication, DNA recombination and DNA repair. Can also use NAD, but less efficiently than ATP. This is DNA ligase from Thermococcus kodakarensis (strain ATCC BAA-918 / JCM 12380 / KOD1) (Pyrococcus kodakaraensis (strain KOD1)).